Here is a 119-residue protein sequence, read N- to C-terminus: Toxin ICK-8 (119 aa).

An N-terminal signal peptide occupies residues 1–19 (MMKLYSLVIIATLAAAAFA). Disulfide bonds link C59/C74, C67/C80, C71/C116, and C73/C87.

It belongs to the neurotoxin 25 family. ICK-8 subfamily. In terms of tissue distribution, expressed by the venom gland.

It localises to the secreted. In terms of biological role, ion channel inhibitor. The sequence is that of Toxin ICK-8 from Trittame loki (Brush-footed trapdoor spider).